The primary structure comprises 334 residues: Tryptophan--tRNA ligase (334 aa).

ATP contacts are provided by residues 11–13 (QPS) and 19–20 (GN). Positions 12-20 (PSGELTIGN) match the 'HIGH' region motif. Asp-135 is a binding site for L-tryptophan. ATP is bound by residues 147-149 (GED), Val-186, and 195-199 (KMSKS). The 'KMSKS' region motif lies at 195–199 (KMSKS).

This sequence belongs to the class-I aminoacyl-tRNA synthetase family. As to quaternary structure, homodimer.

The protein resides in the cytoplasm. The enzyme catalyses tRNA(Trp) + L-tryptophan + ATP = L-tryptophyl-tRNA(Trp) + AMP + diphosphate + H(+). In terms of biological role, catalyzes the attachment of tryptophan to tRNA(Trp). Amino acylates tRNA(Trp) with both L- and D-tryptophan, although D-tryptophan is a poor substrate. The polypeptide is Tryptophan--tRNA ligase (Escherichia coli (strain K12)).